Here is a 238-residue protein sequence, read N- to C-terminus: MDAVNFSILAPRYGSHPMMSAWSGIGTSDMNGGAFNWGGIWSGIKNFGSNVKNWGSRAWNSQTGKLLRQKLNDTKVREKLVEGISTGVHGALDIANQEIAKQIERRLERQQPLEPEVEEETVETKSEAKAPLVVEMPLKRPRDEDLVITADEPPSYEETIKTMAPLVPMTRPHPSMARPVIADRPTTLELKPSDQPPPYSPQSSNMPVTAPVRSRGWQGTLANIVGVGLSNVKRRRCF.

Positions 1–33 (MDAVNFSILAPRYGSHPMMSAWSGIGTSDMNGG) are excised as a propeptide. An amphipathic alpha-helix essential for membrane lytic activity region spans residues 34–54 (AFNWGGIWSGIKNFGSNVKNW). Residues 36 to 53 (NWGGIWSGIKNFGSNVKN) form an involved in endosomal membrane lysis region. The tract at residues 48–74 (GSNVKNWGSRAWNSQTGKLLRQKLNDT) is interaction with hexon protein. The Nuclear export signal motif lies at 67-76 (LRQKLNDTKV). A PPXY motif motif is present at residues 153–156 (PPSY). Positions 187–212 (TLELKPSDQPPPYSPQSSNMPVTAPV) are disordered. Positions 219 to 230 (GTLANIVGVGLS) match the Nuclear export signal motif. The interaction with hexon protein stretch occupies residues 221–227 (LANIVGV). The binds to importin alpha/beta, involved in hexon nuclear import stretch occupies residues 228–238 (GLSNVKRRRCF). Residues 233–236 (KRRR) carry the Nuclear localization signal motif.

Belongs to the adenoviridae protein VI family. As to quaternary structure, interacts with hexon protein; this interaction allows nuclear import of hexon trimers and possibly pre-capsid assembly. Interacts (via C-terminal NLS) with importin alpha/beta. In terms of assembly, interacts (via PPxY motif) with host NEDD4 ubiquitine ligase; this interaction might play a role in virus intracellular transport during entry. Part of a complex composed of the core-capsid bridging protein, the endosome lysis protein VI and the hexon-linking protein VIII; these interactions bridge the virus core to the capsid. Interacts with peripentonal hexons; this interaction stabilizes the capsid by gluing two peripentonal hexons together and joining them with an adjacent group-of-nine hexon. Heterodimer with the viral protease; disulfide-linked. Interacts with the viral protease. In terms of processing, ubiquitinated by Nedd4 following partial capsid disassembly; which might play a role in intracellular virus movement during entry. Contains the major nuclear import and export signals. Proteolytically removed during virion maturation. The processing of the C-terminus turns the precursor into a mature viral structural protein and abrogates its ability to promote hexon import and act as a potential chaperone protein.

Its subcellular location is the host nucleus. It is found in the host cytoplasm. It localises to the virion. Functionally, during virus assembly, promotes hexon trimers nuclear import through nuclear pore complexes via an importin alpha/beta-dependent mechanism. By analogy to herpesviruses capsid assembly, might act as a chaperone to promote the formation of the icosahedral capsid. In terms of biological role, structural component of the virion that provides increased stability to the particle shell through its interaction with the core-capsid bridging protein and the hexon-linking protein VIII. Fibers shedding during virus entry into host cell allows the endosome lysis protein to be exposed as a membrane-lytic peptide. Exhibits pH-independent membrane fragmentation activity and probably mediates viral rapid escape from host endosome via organellar membrane lysis. It is not clear if it then remains partially associated with the capsid and involved in the intracellular microtubule-dependent transport of capsid to the nucleus, or if it is lost during endosomal penetration. Its function is as follows. Cofactor that activates the viral protease. Binds to viral protease in a 1:1 ratio. The sequence is that of Pre-protein VI from Canis lupus familiaris (Dog).